The primary structure comprises 230 residues: Enolase-phosphatase E1 (230 aa).

Belongs to the HAD-like hydrolase superfamily. MasA/MtnC family. In terms of assembly, monomer. It depends on Mg(2+) as a cofactor.

The enzyme catalyses 5-methylsulfanyl-2,3-dioxopentyl phosphate + H2O = 1,2-dihydroxy-5-(methylsulfanyl)pent-1-en-3-one + phosphate. The protein operates within amino-acid biosynthesis; L-methionine biosynthesis via salvage pathway; L-methionine from S-methyl-5-thio-alpha-D-ribose 1-phosphate: step 3/6. It participates in amino-acid biosynthesis; L-methionine biosynthesis via salvage pathway; L-methionine from S-methyl-5-thio-alpha-D-ribose 1-phosphate: step 4/6. Bifunctional enzyme that catalyzes the enolization of 2,3-diketo-5-methylthiopentyl-1-phosphate (DK-MTP-1-P) into the intermediate 2-hydroxy-3-keto-5-methylthiopentenyl-1-phosphate (HK-MTPenyl-1-P), which is then dephosphorylated to form the acireductone 1,2-dihydroxy-3-keto-5-methylthiopentene (DHK-MTPene). The polypeptide is Enolase-phosphatase E1 (Bradyrhizobium sp. (strain BTAi1 / ATCC BAA-1182)).